A 356-amino-acid polypeptide reads, in one-letter code: Hyaluronan and proteoglycan link protein 1 (356 aa).

Positions 1–9 (MRSLLLLVL) are excised as a propeptide. In terms of domain architecture, Ig-like V-type spans 40-154 (PRLLVEAEQA…EGLEDDTAVV (115 aa)). An N-linked (GlcNAc...) asparagine glycan is attached at asparagine 58. 5 disulfides stabilise this stretch: cysteine 63–cysteine 141, cysteine 183–cysteine 254, cysteine 207–cysteine 228, cysteine 281–cysteine 351, and cysteine 306–cysteine 327. Link domains follow at residues 161–256 (VVFP…FCFT) and 261–353 (GRFY…YCFR).

It belongs to the HAPLN family. As to expression, ubiquitously expressed.

It localises to the secreted. The protein localises to the extracellular space. It is found in the extracellular matrix. Its function is as follows. Stabilizes the aggregates of proteoglycan monomers with hyaluronic acid in the extracellular cartilage matrix. The polypeptide is Hyaluronan and proteoglycan link protein 1 (Hapln1) (Mus musculus (Mouse)).